The following is a 519-amino-acid chain: Sodium-dependent dicarboxylate transporter SdcS (519 aa).

14 helical membrane-spanning segments follow: residues 29 to 49 (VGQL…LLLF), 59 to 79 (VFVL…AIPI), 103 to 123 (AQYG…AIAM), 136 to 156 (IINT…IATG), 159 to 179 (SMFV…LAII), 201 to 221 (ALVL…LIGT), 241 to 261 (FAKW…LVWI), 297 to 317 (KVVL…EFLL), 322 to 342 (FTSE…LFLI), 362 to 382 (LPWG…GISE), 395 to 415 (LIEG…VLFL), 428 to 448 (ILPI…LLMV), 451 to 471 (AMAA…AIVF), and 490 to 510 (LLSI…VLGI).

It belongs to the SLC13A/DASS transporter (TC 2.A.47) family. NADC subfamily.

Its subcellular location is the cell membrane. Its function is as follows. Mediates the transport of dicarboxylates across the cytoplasmic membrane via a Na(+)-electrochemical gradient. This chain is Sodium-dependent dicarboxylate transporter SdcS (sdcS), found in Staphylococcus saprophyticus subsp. saprophyticus (strain ATCC 15305 / DSM 20229 / NCIMB 8711 / NCTC 7292 / S-41).